Consider the following 202-residue polypeptide: Securin (202 aa).

Residues 1–92 (MATLIYVDKE…QKQPSFSAKK (92 aa)) are disordered. N-acetylalanine is present on Ala-2. The short motif at 61-64 (RKAL) is the D-box element. 2 short sequence motifs (TEK-box) span residues 71-73 (TEK) and 94-96 (TEK). Residues 163–173 (XPSPVKMPSPP) carry the SH3-binding motif. Position 165 is a phosphoserine; by CDK1 (Ser-165).

Belongs to the securin family. As to quaternary structure, interacts with RPS10 and DNAJA1. Interacts with the caspase-like ESPL1, and prevents its protease activity probably by covering its active site. Interacts with TP53 and blocks its activity probably by blocking its binding to DNA. Interacts with the Ku 70 kDa subunit of ds-DNA kinase. Interacts with PTTG1IP. Post-translationally, phosphorylated at Ser-165 by CDK1 during mitosis. Phosphorylated in vitro by ds-DNA kinase. In terms of processing, ubiquitinated through 'Lys-11' linkage of ubiquitin moieties by the anaphase promoting complex (APC) at the onset of anaphase, conducting to its degradation. 'Lys-11'-linked ubiquitination is mediated by the E2 ligase UBE2C/UBCH10.

It is found in the cytoplasm. It localises to the nucleus. Functionally, regulatory protein, which plays a central role in chromosome stability, in the p53/TP53 pathway, and DNA repair. Probably acts by blocking the action of key proteins. During the mitosis, it blocks Separase/ESPL1 function, preventing the proteolysis of the cohesin complex and the subsequent segregation of the chromosomes. At the onset of anaphase, it is ubiquitinated, conducting to its destruction and to the liberation of ESPL1. Its function is however not limited to a blocking activity, since it is required to activate ESPL1. Negatively regulates the transcriptional activity and related apoptosis activity of TP53. The negative regulation of TP53 may explain the strong transforming capability of the protein when it is overexpressed. May also play a role in DNA repair via its interaction with Ku, possibly by connecting DNA damage-response pathways with sister chromatid separation. This Pan troglodytes (Chimpanzee) protein is Securin (PTTG1).